Reading from the N-terminus, the 541-residue chain is Major facilitator-type transporter ecdD (541 aa).

The helical transmembrane segment at 15–35 (AWPAILISGFVAFGGILFGYD) threads the bilayer. An N-linked (GlcNAc...) asparagine glycan is attached at Asn-64. Transmembrane regions (helical) follow at residues 72-92 (AIVS…SPMG), 106-126 (GIFV…PFLA), 129-149 (FFAG…QSET), and 156-176 (GFIV…ASVL). Asn-178 and Asn-184 each carry an N-linked (GlcNAc...) asparagine glycan. A helical transmembrane segment spans residues 191–211 (IPIAVQFAWSIILVGGMLILP). An N-linked (GlcNAc...) asparagine glycan is attached at Asn-253. 6 consecutive transmembrane segments (helical) span residues 277–297 (LVTG…FIMY), 313–333 (VITL…LYAI), 340–360 (PVLL…AVLG), 384–404 (IAFI…SAWV), 418–440 (SLSM…TPYL), and 454–474 (IFFI…FMIY).

The protein belongs to the major facilitator superfamily. Sugar transporter (TC 2.A.1.1) family.

Its subcellular location is the membrane. The polypeptide is Major facilitator-type transporter ecdD (Aspergillus rugulosus (Emericella rugulosa)).